Here is a 197-residue protein sequence, read N- to C-terminus: Probable nicotinate-nucleotide adenylyltransferase (197 aa).

The protein belongs to the NadD family.

The catalysed reaction is nicotinate beta-D-ribonucleotide + ATP + H(+) = deamido-NAD(+) + diphosphate. Its pathway is cofactor biosynthesis; NAD(+) biosynthesis; deamido-NAD(+) from nicotinate D-ribonucleotide: step 1/1. Functionally, catalyzes the reversible adenylation of nicotinate mononucleotide (NaMN) to nicotinic acid adenine dinucleotide (NaAD). The chain is Probable nicotinate-nucleotide adenylyltransferase from Thermosipho melanesiensis (strain DSM 12029 / CIP 104789 / BI429).